The following is an 84-amino-acid chain: Cell division topological specificity factor (84 aa).

It belongs to the MinE family.

Prevents the cell division inhibition by proteins MinC and MinD at internal division sites while permitting inhibition at polar sites. This ensures cell division at the proper site by restricting the formation of a division septum at the midpoint of the long axis of the cell. This chain is Cell division topological specificity factor, found in Pseudomonas fluorescens (strain ATCC BAA-477 / NRRL B-23932 / Pf-5).